A 97-amino-acid polypeptide reads, in one-letter code: MLTIKANLRIYHKKGATRRLRKQNKCPAVIYNRGQEPSIPIILNQNDILHPEAVIQLYKNNVILLFIENQQPITVKVQELQYHPFKSKLIHIDFTRV.

This sequence belongs to the bacterial ribosomal protein bL25 family. In terms of assembly, part of the 50S ribosomal subunit; part of the 5S rRNA/L5/L18/L25 subcomplex. Contacts the 5S rRNA. Binds to the 5S rRNA independently of L5 and L18.

Its function is as follows. This is one of the proteins that binds to the 5S RNA in the ribosome where it forms part of the central protuberance. This is Large ribosomal subunit protein bL25 from Blochmanniella pennsylvanica (strain BPEN).